The following is a 176-amino-acid chain: Ribosome rescue factor SmrB (176 aa).

The Smr domain maps to 97 to 172 (LDMHGMTQQE…GDGALLVLLS (76 aa)).

Belongs to the SmrB family. As to quaternary structure, associates with collided ribosomes, but not with correctly translating polysomes.

In terms of biological role, acts as a ribosome collision sensor. Detects stalled/collided disomes (pairs of ribosomes where the leading ribosome is stalled and a second ribosome has collided with it) and endonucleolytically cleaves mRNA at the 5' boundary of the stalled ribosome. Stalled/collided disomes form a new interface (primarily via the 30S subunits) that binds SmrB. Cleaved mRNA becomes available for tmRNA ligation, leading to ribosomal subunit dissociation and rescue of stalled ribosomes. This Vibrio vulnificus (strain YJ016) protein is Ribosome rescue factor SmrB.